The chain runs to 72 residues: Mu-like prophage FluMu protein C (72 aa).

The H-T-H motif DNA-binding region spans 35–55 (NVPDLIKKYRLSESTIYAILR).

The protein belongs to the c/mor transcriptional regulatory family.

Its function is as follows. Required for transcription of the phage late genes. In Haemophilus influenzae (strain ATCC 51907 / DSM 11121 / KW20 / Rd), this protein is Mu-like prophage FluMu protein C.